The chain runs to 699 residues: Elongation factor G (699 aa).

In terms of domain architecture, tr-type G spans 8–283 (EHIRNIGICA…AVVYFLPSPI (276 aa)). Residues 17 to 24 (AHIDAGKT), 81 to 85 (DTPGH), and 135 to 138 (NKMD) contribute to the GTP site.

Belongs to the TRAFAC class translation factor GTPase superfamily. Classic translation factor GTPase family. EF-G/EF-2 subfamily.

The protein localises to the cytoplasm. Its function is as follows. Catalyzes the GTP-dependent ribosomal translocation step during translation elongation. During this step, the ribosome changes from the pre-translocational (PRE) to the post-translocational (POST) state as the newly formed A-site-bound peptidyl-tRNA and P-site-bound deacylated tRNA move to the P and E sites, respectively. Catalyzes the coordinated movement of the two tRNA molecules, the mRNA and conformational changes in the ribosome. The polypeptide is Elongation factor G (Rickettsia akari (strain Hartford)).